The sequence spans 284 residues: Pantothenate synthetase (284 aa).

30–37 (MGYLHEGH) contacts ATP. His-37 serves as the catalytic Proton donor. Gln-61 lines the (R)-pantoate pocket. Beta-alanine is bound at residue Gln-61. 147-150 (GQKD) serves as a coordination point for ATP. (R)-pantoate is bound at residue Gln-153. Residues Val-176 and 184–187 (KSSR) each bind ATP.

Belongs to the pantothenate synthetase family. As to quaternary structure, homodimer.

The protein resides in the cytoplasm. It catalyses the reaction (R)-pantoate + beta-alanine + ATP = (R)-pantothenate + AMP + diphosphate + H(+). It participates in cofactor biosynthesis; (R)-pantothenate biosynthesis; (R)-pantothenate from (R)-pantoate and beta-alanine: step 1/1. Functionally, catalyzes the condensation of pantoate with beta-alanine in an ATP-dependent reaction via a pantoyl-adenylate intermediate. The sequence is that of Pantothenate synthetase from Lysinibacillus sphaericus (strain C3-41).